The sequence spans 37 residues: Cytochrome b6-f complex subunit 5 (37 aa).

Residues 5–25 form a helical membrane-spanning segment; the sequence is ILLGIVLGMVLVTLAGLFVAA.

This sequence belongs to the PetG family. The 4 large subunits of the cytochrome b6-f complex are cytochrome b6, subunit IV (17 kDa polypeptide, PetD), cytochrome f and the Rieske protein, while the 4 small subunits are PetG, PetL, PetM and PetN. The complex functions as a dimer.

The protein resides in the cellular thylakoid membrane. In terms of biological role, component of the cytochrome b6-f complex, which mediates electron transfer between photosystem II (PSII) and photosystem I (PSI), cyclic electron flow around PSI, and state transitions. PetG is required for either the stability or assembly of the cytochrome b6-f complex. The protein is Cytochrome b6-f complex subunit 5 of Synechococcus sp. (strain JA-3-3Ab) (Cyanobacteria bacterium Yellowstone A-Prime).